The following is a 326-amino-acid chain: Methionine import ATP-binding protein MetN (326 aa).

One can recognise an ABC transporter domain in the interval 1–226; the sequence is MVFYTIGPQT…PQQPITRQFV (226 aa). 23–30 provides a ligand contact to ATP; sequence GYSGAGKS.

This sequence belongs to the ABC transporter superfamily. Methionine importer (TC 3.A.1.24) family. The complex is composed of two ATP-binding proteins (MetN), two transmembrane proteins (MetI) and a solute-binding protein (MetQ).

It is found in the cell inner membrane. It catalyses the reaction L-methionine(out) + ATP + H2O = L-methionine(in) + ADP + phosphate + H(+). The catalysed reaction is D-methionine(out) + ATP + H2O = D-methionine(in) + ADP + phosphate + H(+). Part of the ABC transporter complex MetNIQ involved in methionine import. Responsible for energy coupling to the transport system. The polypeptide is Methionine import ATP-binding protein MetN (Erwinia pyrifoliae (strain DSM 12162 / Ep1/96)).